Consider the following 255-residue polypeptide: 3-deoxy-manno-octulosonate cytidylyltransferase (255 aa).

Belongs to the KdsB family.

It is found in the cytoplasm. It catalyses the reaction 3-deoxy-alpha-D-manno-oct-2-ulosonate + CTP = CMP-3-deoxy-beta-D-manno-octulosonate + diphosphate. It functions in the pathway nucleotide-sugar biosynthesis; CMP-3-deoxy-D-manno-octulosonate biosynthesis; CMP-3-deoxy-D-manno-octulosonate from 3-deoxy-D-manno-octulosonate and CTP: step 1/1. It participates in bacterial outer membrane biogenesis; lipopolysaccharide biosynthesis. Its function is as follows. Activates KDO (a required 8-carbon sugar) for incorporation into bacterial lipopolysaccharide in Gram-negative bacteria. This chain is 3-deoxy-manno-octulosonate cytidylyltransferase, found in Xanthobacter autotrophicus (strain ATCC BAA-1158 / Py2).